We begin with the raw amino-acid sequence, 1202 residues long: Inner capsid protein VP3 (1202 aa).

Disordered stretches follow at residues 1–45 (MRPI…SGKI) and 73–99 (YTSKDSVQHGGSSITYTSNTTGNPRVT). Over residues 10-21 (NQERTTTKHQET) the composition is skewed to basic and acidic residues. A compositionally biased stretch (polar residues) spans 27–45 (NEQTTSDQRFTRSSNSGKI).

It belongs to the turreted BTV-fold inner capsid family. In terms of assembly, homodecamer; each decamer is made up of two conformers of VP2, called VP2A and VP2B. 12 homodecamers assemble to form an icosahedral capsid.

Its subcellular location is the virion. Its function is as follows. Inner capsid protein that self-assembles to form an icosahedral capsid with a T=2 symmetry, which consists of 120 copies of VP2, with channels at each of its five-fold vertices. This capsid constitutes the innermost concentric layer of the viral mature particle. This chain is Inner capsid protein VP3 (S3), found in Aedes pseudoscutellaris reovirus (isolate France) (ApRV).